The primary structure comprises 353 residues: UDP-N-acetylenolpyruvoylglucosamine reductase (353 aa).

One can recognise an FAD-binding PCMH-type domain in the interval Leu31–Pro201. Residue Arg177 is part of the active site. Catalysis depends on Ser250, which acts as the Proton donor. Residue Glu346 is part of the active site.

It belongs to the MurB family. FAD is required as a cofactor.

The protein localises to the cytoplasm. It carries out the reaction UDP-N-acetyl-alpha-D-muramate + NADP(+) = UDP-N-acetyl-3-O-(1-carboxyvinyl)-alpha-D-glucosamine + NADPH + H(+). Its pathway is cell wall biogenesis; peptidoglycan biosynthesis. Functionally, cell wall formation. The chain is UDP-N-acetylenolpyruvoylglucosamine reductase from Bordetella parapertussis (strain 12822 / ATCC BAA-587 / NCTC 13253).